Reading from the N-terminus, the 384-residue chain is Glutamate 5-kinase (384 aa).

Lys24 is a binding site for ATP. Substrate is bound by residues Ser64, Asp149, and Asn161. ATP is bound by residues 181–182 (TD) and 223–229 (TGGMRTK). Residues 288-370 (PGAILIDAGA…RDIQTLLGYT (83 aa)) form the PUA domain.

This sequence belongs to the glutamate 5-kinase family.

Its subcellular location is the cytoplasm. It carries out the reaction L-glutamate + ATP = L-glutamyl 5-phosphate + ADP. It participates in amino-acid biosynthesis; L-proline biosynthesis; L-glutamate 5-semialdehyde from L-glutamate: step 1/2. Catalyzes the transfer of a phosphate group to glutamate to form L-glutamate 5-phosphate. The sequence is that of Glutamate 5-kinase from Xylella fastidiosa (strain M23).